The chain runs to 34 residues: Trypsin inhibitor (34 aa).

2 disulfides stabilise this stretch: Cys-7–Cys-29 and Cys-11–Cys-25.

The protein resides in the secreted. Its function is as follows. Inhibits trypsin. The chain is Trypsin inhibitor from Veronica hederifolia (Ivy-leaved speedwell).